We begin with the raw amino-acid sequence, 305 residues long: PI protein (305 aa).

Belongs to the initiator RepB protein family. Homodimer.

Initiation for plasmid R6K DNA replication. This Escherichia coli protein is PI protein (pir).